A 401-amino-acid polypeptide reads, in one-letter code: UPF0242 protein CCA_01002 (401 aa).

The protein belongs to the UPF0242 family.

The sequence is that of UPF0242 protein CCA_01002 from Chlamydia caviae (strain ATCC VR-813 / DSM 19441 / 03DC25 / GPIC) (Chlamydophila caviae).